A 222-amino-acid chain; its full sequence is Protein-L-isoaspartate O-methyltransferase (222 aa).

The active site involves S70.

The protein belongs to the methyltransferase superfamily. L-isoaspartyl/D-aspartyl protein methyltransferase family.

The protein localises to the cytoplasm. The enzyme catalyses [protein]-L-isoaspartate + S-adenosyl-L-methionine = [protein]-L-isoaspartate alpha-methyl ester + S-adenosyl-L-homocysteine. In terms of biological role, catalyzes the methyl esterification of L-isoaspartyl residues in peptides and proteins that result from spontaneous decomposition of normal L-aspartyl and L-asparaginyl residues. It plays a role in the repair and/or degradation of damaged proteins. In Jannaschia sp. (strain CCS1), this protein is Protein-L-isoaspartate O-methyltransferase.